The primary structure comprises 282 residues: Pantothenate synthetase (282 aa).

30–37 (MGGLHQGH) lines the ATP pocket. His-37 acts as the Proton donor in catalysis. A (R)-pantoate-binding site is contributed by Gln-61. Gln-61 lines the beta-alanine pocket. 146–149 (GQKD) provides a ligand contact to ATP. Gln-152 contributes to the (R)-pantoate binding site. Residues Ile-175 and 183 to 186 (MSTR) each bind ATP.

Belongs to the pantothenate synthetase family. Homodimer.

It localises to the cytoplasm. It carries out the reaction (R)-pantoate + beta-alanine + ATP = (R)-pantothenate + AMP + diphosphate + H(+). It participates in cofactor biosynthesis; (R)-pantothenate biosynthesis; (R)-pantothenate from (R)-pantoate and beta-alanine: step 1/1. Catalyzes the condensation of pantoate with beta-alanine in an ATP-dependent reaction via a pantoyl-adenylate intermediate. The protein is Pantothenate synthetase of Vesicomyosocius okutanii subsp. Calyptogena okutanii (strain HA).